The primary structure comprises 89 residues: UPF0223 protein BcerKBAB4_3787 (89 aa).

It belongs to the UPF0223 family.

The chain is UPF0223 protein BcerKBAB4_3787 from Bacillus mycoides (strain KBAB4) (Bacillus weihenstephanensis).